A 665-amino-acid polypeptide reads, in one-letter code: Coiled-coil domain-containing protein 138 (665 aa).

The residue at position 48 (threonine 48) is a Phosphothreonine. Serine 49 is subject to Phosphoserine. Residues 198–323 are a coiled coil; sequence QQKFAEELQK…YEFMTIQRLK (126 aa). Serine 469 bears the Phosphoserine mark.

The protein is Coiled-coil domain-containing protein 138 (CCDC138) of Macaca fascicularis (Crab-eating macaque).